The primary structure comprises 151 residues: Glycosylation-dependent cell adhesion molecule 1 (151 aa).

The signal sequence occupies residues 1-19 (MKFFTVLLFVSLAATSLAL). Positions 29-123 (MKTQPTDAIP…ENLTKSSQTV (95 aa)) are disordered. Residues 42 to 52 (STPTSYTSEES) show a composition bias toward low complexity. Over residues 53–71 (TSSKDLSKEPSIFREELIS) the composition is skewed to basic and acidic residues. A phosphoserine mark is found at Ser54, Ser59, Ser63, and Ser71. A compositionally biased stretch (low complexity) spans 103–114 (RPTTSAATTSEE). The N-linked (GlcNAc...) asparagine glycan is linked to Asn115.

This sequence belongs to the PP3/GlyCAM-1 family. Post-translationally, extensively O-glycosylated. In terms of tissue distribution, lymph nodes. Associated with the lumenal surface of the high endothelial venules of peripheral lymph nodes.

The protein localises to the cell membrane. Its function is as follows. Adhesion molecule that accomplishes cell binding by presenting carbohydrate(s) to the lectin domain of L-selectin. The sequence is that of Glycosylation-dependent cell adhesion molecule 1 (Glycam1) from Mus musculus (Mouse).